Reading from the N-terminus, the 360-residue chain is Peptide chain release factor 1 (360 aa).

N5-methylglutamine is present on Q234.

It belongs to the prokaryotic/mitochondrial release factor family. Methylated by PrmC. Methylation increases the termination efficiency of RF1.

Its subcellular location is the cytoplasm. Its function is as follows. Peptide chain release factor 1 directs the termination of translation in response to the peptide chain termination codons UAG and UAA. This chain is Peptide chain release factor 1, found in Renibacterium salmoninarum (strain ATCC 33209 / DSM 20767 / JCM 11484 / NBRC 15589 / NCIMB 2235).